A 360-amino-acid polypeptide reads, in one-letter code: C-X-C chemokine receptor type 2 (360 aa).

The Extracellular segment spans residues 1-48; the sequence is MEDFNMESDSFEDFWKGEDLSNYSYSSTLPPFLLDAAPCEPESLEINK. Asparagine 22 carries N-linked (GlcNAc...) asparagine glycosylation. A helical transmembrane segment spans residues 49–75; sequence YFVVIIYALVFLLSLLGNSLVMLVILY. Over 76-84 the chain is Cytoplasmic; the sequence is SRVGRSVTD. Residues 85-105 traverse the membrane as a helical segment; the sequence is VYLLNLALADLLFALTLPIWA. Residues 106–120 are Extracellular-facing; it reads ASKVNGWIFGTFLCK. An intrachain disulfide couples cysteine 119 to cysteine 196. Residues 121–142 form a helical membrane-spanning segment; the sequence is VVSLLKEVNFYSGILLLACISV. Residues 143–163 are Cytoplasmic-facing; sequence DRYLAIVHATRTLTQKRYLVK. Residues 164–183 traverse the membrane as a helical segment; that stretch reads FICLSIWGLSLLLALPVLLF. The Extracellular portion of the chain corresponds to 184 to 208; the sequence is RRTVYSSNVSPACYEDMGNNTANWR. A helical membrane pass occupies residues 209-231; it reads MLLRILPQSFGFIVPLLIMLFCY. Over 232–251 the chain is Cytoplasmic; that stretch reads GFTLRTLFKAHMGQKHRAMR. Residues 252 to 273 traverse the membrane as a helical segment; it reads VIFAVVLIFLLCWLPYNLVLLA. The Extracellular portion of the chain corresponds to 274-294; it reads DTLMRTQVIQETCERRNHIDR. Residues 295–315 traverse the membrane as a helical segment; the sequence is ALDATEILGILHSCLNPLIYA. The Cytoplasmic segment spans residues 316–360; that stretch reads FIGQKFRHGLLKILAIHGLISKDSLPKDSRPSFVGSSSGHTSTTL. 4 positions are modified to phosphoserine: serine 347, serine 351, serine 352, and serine 353.

The protein belongs to the G-protein coupled receptor 1 family. As to quaternary structure, interacts with IL8. Interacts with GNAI2. Phosphorylated upon ligand binding; which is required for desensitization. Post-translationally, (Microbial infection) Proteolytically cleaved by Staphylococcus aureus staphopain A/SspP. This cleavage inhibits CXCR2-dependent neutrophil activation and chemotaxis.

The protein localises to the cell membrane. Functionally, receptor for interleukin-8 which is a powerful neutrophil chemotactic factor. Binding of IL-8 to the receptor causes activation of neutrophils. This response is mediated via a G-protein that activates a phosphatidylinositol-calcium second messenger system. Binds to IL-8 with high affinity. Also binds with high affinity to CXCL3, GRO/MGSA and NAP-2. The protein is C-X-C chemokine receptor type 2 (CXCR2) of Homo sapiens (Human).